The chain runs to 82 residues: ATP synthase subunit c (82 aa).

2 consecutive transmembrane segments (helical) span residues 7–27 (LVAL…SIGI) and 53–73 (FILA…ALLF).

The protein belongs to the ATPase C chain family. F-type ATPases have 2 components, F(1) - the catalytic core - and F(0) - the membrane proton channel. F(1) has five subunits: alpha(3), beta(3), gamma(1), delta(1), epsilon(1). F(0) has three main subunits: a(1), b(2) and c(10-14). The alpha and beta chains form an alternating ring which encloses part of the gamma chain. F(1) is attached to F(0) by a central stalk formed by the gamma and epsilon chains, while a peripheral stalk is formed by the delta and b chains.

The protein resides in the cell inner membrane. F(1)F(0) ATP synthase produces ATP from ADP in the presence of a proton or sodium gradient. F-type ATPases consist of two structural domains, F(1) containing the extramembraneous catalytic core and F(0) containing the membrane proton channel, linked together by a central stalk and a peripheral stalk. During catalysis, ATP synthesis in the catalytic domain of F(1) is coupled via a rotary mechanism of the central stalk subunits to proton translocation. In terms of biological role, key component of the F(0) channel; it plays a direct role in translocation across the membrane. A homomeric c-ring of between 10-14 subunits forms the central stalk rotor element with the F(1) delta and epsilon subunits. The protein is ATP synthase subunit c of Acidovorax ebreus (strain TPSY) (Diaphorobacter sp. (strain TPSY)).